We begin with the raw amino-acid sequence, 70 residues long: uncharacterized protein (70 aa).

This is an uncharacterized protein from Dictyostelium discoideum (Social amoeba).